The chain runs to 347 residues: NADH-ubiquinone oxidoreductase chain 2 (347 aa).

Transmembrane regions (helical) follow at residues 3–23 (PIIL…TMIS), 25–45 (HWLL…PILM), 59–79 (YFLT…INTA), 96–116 (LVTM…FWVP), 127–147 (GMLL…QIFP), 150–170 (NPNI…WGGL), 193–213 (ILMY…MLTI), 240–260 (ITLT…LTGF), 274–294 (SNIM…YFYM), and 323–343 (IFLL…SPAL).

The protein belongs to the complex I subunit 2 family. In terms of assembly, core subunit of respiratory chain NADH dehydrogenase (Complex I) which is composed of 45 different subunits. Interacts with TMEM242.

The protein resides in the mitochondrion inner membrane. It catalyses the reaction a ubiquinone + NADH + 5 H(+)(in) = a ubiquinol + NAD(+) + 4 H(+)(out). In terms of biological role, core subunit of the mitochondrial membrane respiratory chain NADH dehydrogenase (Complex I) which catalyzes electron transfer from NADH through the respiratory chain, using ubiquinone as an electron acceptor. Essential for the catalytic activity and assembly of complex I. In Lemur catta (Ring-tailed lemur), this protein is NADH-ubiquinone oxidoreductase chain 2.